We begin with the raw amino-acid sequence, 155 residues long: Ribosomal RNA large subunit methyltransferase H (155 aa).

S-adenosyl-L-methionine is bound by residues Leu-73, Gly-104, and 123–128; that span reads LSRMTF.

This sequence belongs to the RNA methyltransferase RlmH family. Homodimer.

It is found in the cytoplasm. It carries out the reaction pseudouridine(1915) in 23S rRNA + S-adenosyl-L-methionine = N(3)-methylpseudouridine(1915) in 23S rRNA + S-adenosyl-L-homocysteine + H(+). In terms of biological role, specifically methylates the pseudouridine at position 1915 (m3Psi1915) in 23S rRNA. The chain is Ribosomal RNA large subunit methyltransferase H from Methylococcus capsulatus (strain ATCC 33009 / NCIMB 11132 / Bath).